A 418-amino-acid polypeptide reads, in one-letter code: Pyrophosphate--fructose 6-phosphate 1-phosphotransferase (418 aa).

Gly13 contacts diphosphate. Asn111 is a binding site for Mg(2+). Residues 139-141 (TID), 187-189 (MGR), Glu244, and 295-298 (YLQR) each bind substrate. Asp141 functions as the Proton acceptor in the catalytic mechanism.

The protein belongs to the phosphofructokinase type A (PFKA) family. PPi-dependent PFK group II subfamily. Clade 'B2' sub-subfamily. In terms of assembly, homodimer. Requires Mg(2+) as cofactor.

It is found in the cytoplasm. It carries out the reaction beta-D-fructose 6-phosphate + diphosphate = beta-D-fructose 1,6-bisphosphate + phosphate + H(+). It functions in the pathway carbohydrate degradation; glycolysis; D-glyceraldehyde 3-phosphate and glycerone phosphate from D-glucose: step 3/4. Non-allosteric. Functionally, catalyzes the phosphorylation of D-fructose 6-phosphate, the first committing step of glycolysis. Uses inorganic phosphate (PPi) as phosphoryl donor instead of ATP like common ATP-dependent phosphofructokinases (ATP-PFKs), which renders the reaction reversible, and can thus function both in glycolysis and gluconeogenesis. Consistently, PPi-PFK can replace the enzymes of both the forward (ATP-PFK) and reverse (fructose-bisphosphatase (FBPase)) reactions. The sequence is that of Pyrophosphate--fructose 6-phosphate 1-phosphotransferase from Xanthomonas campestris pv. campestris (strain B100).